Here is a 142-residue protein sequence, read N- to C-terminus: MALAAVKWAISSRTMLKHLFPVENGALYCVGHKSTYSSLPDDYNCKVELALTSDARTIVCYHPSVDIPYEHTKPIPRPDPVHNNEETHDLVLKTRLEEKSEHLEQGPMIEQLSKMFFTTKHRWYPRGQYHRRRRKLNPPKDR.

Residues 1–32 constitute a mitochondrion transit peptide; the sequence is MALAAVKWAISSRTMLKHLFPVENGALYCVGH.

It belongs to the mitochondrion-specific ribosomal protein mL42 family. Component of the mitochondrial ribosome large subunit (39S) which comprises a 16S rRNA and about 50 distinct proteins. Component of the mitochondrial ribosome small subunit (28S) which comprises a 12S rRNA and about 30 distinct proteins.

The protein resides in the mitochondrion. The polypeptide is Large ribosomal subunit protein mL42 (MRPL42) (Bos taurus (Bovine)).